The primary structure comprises 155 residues: MPVSLVIDNRQKQVEIEQKLIMLLEKAVITSLAYEGWDPDYEVSLSFVSNKEIQNLNRTYRGKDYATDVLSFPLVDDTDGFPMGEEKLLGDVVISVEKAVEQAKEYQHSFEREMGFLMVHSLFHLMGYDHLEETEAQEMRKREEIVLTEMGLVRE.

H120, H124, and H130 together coordinate Zn(2+).

It belongs to the endoribonuclease YbeY family. The cofactor is Zn(2+).

The protein resides in the cytoplasm. Functionally, single strand-specific metallo-endoribonuclease involved in late-stage 70S ribosome quality control and in maturation of the 3' terminus of the 16S rRNA. The sequence is that of Endoribonuclease YbeY from Alkaliphilus metalliredigens (strain QYMF).